We begin with the raw amino-acid sequence, 100 residues long: NADH-quinone oxidoreductase subunit K 2 (100 aa).

Helical transmembrane passes span 4–24, 28–48, and 60–80; these read LWWHISLGVALFVIGAAGVLL, ILVVLMSLELLLNSVNINFIA, and IFAIFVIAITAAEVAVALGIL.

It belongs to the complex I subunit 4L family. As to quaternary structure, NDH-1 is composed of 14 different subunits. Subunits NuoA, H, J, K, L, M, N constitute the membrane sector of the complex.

It is found in the cell inner membrane. The enzyme catalyses a quinone + NADH + 5 H(+)(in) = a quinol + NAD(+) + 4 H(+)(out). Its function is as follows. NDH-1 shuttles electrons from NADH, via FMN and iron-sulfur (Fe-S) centers, to quinones in the respiratory chain. The immediate electron acceptor for the enzyme in this species is believed to be ubiquinone. Couples the redox reaction to proton translocation (for every two electrons transferred, four hydrogen ions are translocated across the cytoplasmic membrane), and thus conserves the redox energy in a proton gradient. This Sinorhizobium fredii (strain NBRC 101917 / NGR234) protein is NADH-quinone oxidoreductase subunit K 2.